The following is a 332-amino-acid chain: Ribosomal RNA small subunit methyltransferase H (332 aa).

S-adenosyl-L-methionine-binding positions include 36–38 (GGY), aspartate 54, phenylalanine 81, aspartate 102, and glutamine 109. Residues 295 to 322 (PRARSAKLRGAERTESPAHAAGDLPGWP) form a disordered region.

It belongs to the methyltransferase superfamily. RsmH family.

The protein resides in the cytoplasm. The catalysed reaction is cytidine(1402) in 16S rRNA + S-adenosyl-L-methionine = N(4)-methylcytidine(1402) in 16S rRNA + S-adenosyl-L-homocysteine + H(+). Its function is as follows. Specifically methylates the N4 position of cytidine in position 1402 (C1402) of 16S rRNA. The polypeptide is Ribosomal RNA small subunit methyltransferase H (Rhodopseudomonas palustris (strain ATCC BAA-98 / CGA009)).